A 666-amino-acid chain; its full sequence is Vicilin-like antimicrobial peptides 2-1 (666 aa).

The N-terminal stretch at methionine 1–alanine 27 is a signal peptide. Disordered stretches follow at residues glutamine 161–glutamine 191 and glutamine 219–phenylalanine 254. Cupin type-1 domains follow at residues serine 271–arginine 410 and tyrosine 455–glutamate 625. The tract at residues asparagine 629–glutamine 655 is disordered. The segment covering glutamine 642–glutamine 655 has biased composition (low complexity).

This sequence belongs to the 7S seed storage protein family.

The protein localises to the secreted. Antimicrobial peptides 2b, 2c and 2d have antibacterial and antifungal activity against a range of species. The sequence is that of Vicilin-like antimicrobial peptides 2-1 from Macadamia integrifolia (Macadamia nut).